The chain runs to 450 residues: Adenylosuccinate lyase (450 aa).

Residues 9–10 (RY), 75–77 (HHD), and 101–102 (TS) each bind N(6)-(1,2-dicarboxyethyl)-AMP. The active-site Proton donor/acceptor is H149. Q223 lines the N(6)-(1,2-dicarboxyethyl)-AMP pocket. S273 functions as the Proton donor/acceptor in the catalytic mechanism. N(6)-(1,2-dicarboxyethyl)-AMP is bound by residues S274, 279 to 281 (KRN), and 318 to 322 (SVERV).

The protein belongs to the lyase 1 family. Adenylosuccinate lyase subfamily. Homotetramer. Residues from neighboring subunits contribute catalytic and substrate-binding residues to each active site.

The enzyme catalyses N(6)-(1,2-dicarboxyethyl)-AMP = fumarate + AMP. The catalysed reaction is (2S)-2-[5-amino-1-(5-phospho-beta-D-ribosyl)imidazole-4-carboxamido]succinate = 5-amino-1-(5-phospho-beta-D-ribosyl)imidazole-4-carboxamide + fumarate. It functions in the pathway purine metabolism; AMP biosynthesis via de novo pathway; AMP from IMP: step 2/2. Its pathway is purine metabolism; IMP biosynthesis via de novo pathway; 5-amino-1-(5-phospho-D-ribosyl)imidazole-4-carboxamide from 5-amino-1-(5-phospho-D-ribosyl)imidazole-4-carboxylate: step 2/2. In terms of biological role, catalyzes two reactions in de novo purine nucleotide biosynthesis. Catalyzes the breakdown of 5-aminoimidazole- (N-succinylocarboxamide) ribotide (SAICAR or 2-[5-amino-1-(5-phospho-beta-D-ribosyl)imidazole-4-carboxamido]succinate) to 5-aminoimidazole-4-carboxamide ribotide (AICAR or 5-amino-1-(5-phospho-beta-D-ribosyl)imidazole-4-carboxamide) and fumarate, and of adenylosuccinate (ADS or N(6)-(1,2-dicarboxyethyl)-AMP) to adenosine monophosphate (AMP) and fumarate. The chain is Adenylosuccinate lyase (purB) from Pyrococcus horikoshii (strain ATCC 700860 / DSM 12428 / JCM 9974 / NBRC 100139 / OT-3).